The chain runs to 248 residues: 5'-nucleotidase SurE (248 aa).

Asp8, Asp9, Ser39, and Asn91 together coordinate a divalent metal cation.

The protein belongs to the SurE nucleotidase family. It depends on a divalent metal cation as a cofactor.

Its subcellular location is the cytoplasm. It carries out the reaction a ribonucleoside 5'-phosphate + H2O = a ribonucleoside + phosphate. Nucleotidase that shows phosphatase activity on nucleoside 5'-monophosphates. In Shewanella amazonensis (strain ATCC BAA-1098 / SB2B), this protein is 5'-nucleotidase SurE.